We begin with the raw amino-acid sequence, 217 residues long: Large ribosomal subunit protein uL4 (217 aa).

The protein belongs to the universal ribosomal protein uL4 family. As to quaternary structure, part of the 50S ribosomal subunit.

In terms of biological role, one of the primary rRNA binding proteins, this protein initially binds near the 5'-end of the 23S rRNA. It is important during the early stages of 50S assembly. It makes multiple contacts with different domains of the 23S rRNA in the assembled 50S subunit and ribosome. Forms part of the polypeptide exit tunnel. The protein is Large ribosomal subunit protein uL4 of Koribacter versatilis (strain Ellin345).